The chain runs to 83 residues: FMRFamide-like neuropeptide 23 (83 aa).

The N-terminal stretch at 1 to 24 (MLLPKISILLYILVVLQETAAVRG) is a signal peptide. Positions 25–36 (ALFRSGRAVPFE) are excised as a propeptide. A Phenylalanine amide modification is found at Phe47. Positions 50–83 (AGMASGVGGGSEGGPDDVKNSYIRVNGEPEIVYQ) are excised as a propeptide.

Belongs to the FARP (FMRFamide related peptide) family. Each flp gene is expressed in a distinct set of neurons.

It is found in the secreted. In terms of biological role, FMRFamides and FMRFamide-like peptides are neuropeptides. This Caenorhabditis elegans protein is FMRFamide-like neuropeptide 23 (flp-23).